A 306-amino-acid chain; its full sequence is Phosphatidate cytidylyltransferase (306 aa).

The interval M1–S28 is disordered. Transmembrane regions (helical) follow at residues A36–P56, G82–W102, P103–W123, A151–Y171, F180–F200, F218–G238, P241–V261, and M285–L305.

This sequence belongs to the CDS family.

Its subcellular location is the cell membrane. It carries out the reaction a 1,2-diacyl-sn-glycero-3-phosphate + CTP + H(+) = a CDP-1,2-diacyl-sn-glycerol + diphosphate. Its pathway is phospholipid metabolism; CDP-diacylglycerol biosynthesis; CDP-diacylglycerol from sn-glycerol 3-phosphate: step 3/3. The polypeptide is Phosphatidate cytidylyltransferase (cdsA) (Mycobacterium bovis (strain ATCC BAA-935 / AF2122/97)).